The primary structure comprises 104 residues: Large ribosomal subunit protein uL24 (104 aa).

This sequence belongs to the universal ribosomal protein uL24 family. In terms of assembly, part of the 50S ribosomal subunit.

One of two assembly initiator proteins, it binds directly to the 5'-end of the 23S rRNA, where it nucleates assembly of the 50S subunit. Its function is as follows. One of the proteins that surrounds the polypeptide exit tunnel on the outside of the subunit. This Afipia carboxidovorans (strain ATCC 49405 / DSM 1227 / KCTC 32145 / OM5) (Oligotropha carboxidovorans) protein is Large ribosomal subunit protein uL24.